The chain runs to 1239 residues: Inner tegument protein (1239 aa).

Low complexity predominate over residues 1 to 10; that stretch reads MASAMESDSS. 3 disordered regions span residues 1–20, 672–708, and 1090–1239; these read MASAMESDSSGGSGGADAQP, GESPQAVGLRPLNLEGEGKAGDAGAEGAEDEEGGGPW, and GRNA…AEDE. Residues 618–1239 are interaction with large tegument protein; it reads NELPKTRSLA…RPPRPTAEDE (622 aa). Low complexity predominate over residues 1115–1126; the sequence is DSSPFSFSSSDF. Residues 1127–1136 show a composition bias toward acidic residues; that stretch reads SDQDEGEGGE. The segment covering 1181–1190 has biased composition (low complexity); the sequence is RTTPSPSRRA. Over residues 1219 to 1232 the composition is skewed to basic residues; sequence VRPRTRRGATRRPP.

This sequence belongs to the herpesviridae inner tegument protein family. As to quaternary structure, interacts (via C-terminus) with the large tegument protein/LTP (via N-terminus).

The protein resides in the virion tegument. The protein localises to the host cytoplasm. It localises to the host nucleus. Its subcellular location is the host Golgi apparatus. It is found in the host trans-Golgi network. In terms of biological role, plays an essential role in cytoplasmic secondary envelopment during viral egress. Interacts with the capsid via the large tegument protein/LTP and participates in its transport to the host trans-Golgi network (TGN) where secondary envelopment occurs. Modulates tegumentation and capsid accumulation at the viral assembly complex. This chain is Inner tegument protein, found in Homo sapiens (Human).